We begin with the raw amino-acid sequence, 149 residues long: Protein SprT-like (149 aa).

Positions 5 to 143 (DYVKQVSLED…CGLCRGKLLL (139 aa)) constitute a SprT-like domain. H64 provides a ligand contact to Zn(2+). Residue E65 is part of the active site. Residue H68 coordinates Zn(2+).

It belongs to the SprT family. It depends on Zn(2+) as a cofactor.

The protein resides in the cytoplasm. The sequence is that of Protein SprT-like from Streptococcus pneumoniae (strain Hungary19A-6).